The chain runs to 220 residues: Adenylate kinase (220 aa).

Position 10-15 (10-15) interacts with ATP; it reads GAGKGT. The tract at residues 30-59 is NMP; it reads STGDMLRAAVKAGTPLGVEAKGYMDAGKLV. AMP is bound by residues threonine 31, arginine 36, 57-59, 85-88, and glutamine 92; these read KLV and GFPR. Positions 122–159 are LID; sequence GRRTHPASGRTYHVKFNPPKVEGHDDVTGEPLIQRDDD. Residues arginine 123 and 132–133 contribute to the ATP site; that span reads TY. The AMP site is built by arginine 156 and arginine 167. Glycine 206 serves as a coordination point for ATP.

It belongs to the adenylate kinase family. In terms of assembly, monomer.

It localises to the cytoplasm. The enzyme catalyses AMP + ATP = 2 ADP. It participates in purine metabolism; AMP biosynthesis via salvage pathway; AMP from ADP: step 1/1. Functionally, catalyzes the reversible transfer of the terminal phosphate group between ATP and AMP. Plays an important role in cellular energy homeostasis and in adenine nucleotide metabolism. The polypeptide is Adenylate kinase (Burkholderia cenocepacia (strain HI2424)).